Reading from the N-terminus, the 317-residue chain is Cold tolerance protein 1 (317 aa).

Belongs to the CTO1 family.

Its function is as follows. Protein required for cold tolerance. Plays a role in the regulation of phosphate uptake. The polypeptide is Cold tolerance protein 1 (Saccharomyces cerevisiae (strain ATCC 204508 / S288c) (Baker's yeast)).